We begin with the raw amino-acid sequence, 376 residues long: Protein-glutamate methylesterase/protein-glutamine glutaminase (376 aa).

Residues 5-122 enclose the Response regulatory domain; the sequence is KVLIVDDSAL…QHTFEDYTDE (118 aa). The residue at position 56 (aspartate 56) is a 4-aspartylphosphate. Residues 185-376 enclose the CheB-type methylesterase domain; that stretch reads SKPSHKVIAL…PEKILALIKK (192 aa). Catalysis depends on residues serine 197, histidine 223, and aspartate 319.

This sequence belongs to the CheB family. Phosphorylated by CheA. Phosphorylation of the N-terminal regulatory domain activates the methylesterase activity.

It is found in the cytoplasm. The enzyme catalyses [protein]-L-glutamate 5-O-methyl ester + H2O = L-glutamyl-[protein] + methanol + H(+). The catalysed reaction is L-glutaminyl-[protein] + H2O = L-glutamyl-[protein] + NH4(+). Involved in chemotaxis. Part of a chemotaxis signal transduction system that modulates chemotaxis in response to various stimuli. Catalyzes the demethylation of specific methylglutamate residues introduced into the chemoreceptors (methyl-accepting chemotaxis proteins or MCP) by CheR. Also mediates the irreversible deamidation of specific glutamine residues to glutamic acid. This Hydrogenovibrio crunogenus (strain DSM 25203 / XCL-2) (Thiomicrospira crunogena) protein is Protein-glutamate methylesterase/protein-glutamine glutaminase.